The primary structure comprises 226 residues: Transcription repressor OFP12 (226 aa).

Over residues 68–87 (SSTFTASTSTAANSSSSSAS) the composition is skewed to low complexity. The tract at residues 68-104 (SSTFTASTSTAANSSSSSASYDDSDNYGFAPDDDSPP) is disordered. One can recognise an OVATE domain in the interval 152-217 (VKHYVQSPDP…IRAFADILVS (66 aa)).

As to quaternary structure, interacts with KNAT1, KNAT2, KNAT3 and KNAT4. Expressed in roots, shoots, stems, flower buds and siliques.

Its subcellular location is the nucleus. In terms of biological role, transcriptional repressor that regulates multiple aspects of plant growth and development through the regulation of BEL1-LIKE (BLH) and KNOX TALE (KNAT) homeodomain transcription factors. This chain is Transcription repressor OFP12 (OFP12), found in Arabidopsis thaliana (Mouse-ear cress).